Consider the following 595-residue polypeptide: Probable xyloglucan glycosyltransferase 9 (595 aa).

The next 2 membrane-spanning stretches (helical) occupy residues 30–50 (AFVV…INGW) and 77–97 (ATYV…LFLI). D177 is a catalytic residue. Substrate contacts are provided by D236 and D238. D330 is an active-site residue. The next 4 membrane-spanning stretches (helical) occupy residues 408–428 (LILP…TMFV), 433–453 (LPDW…ILPS), 545–564 (IYKK…ARSL), and 570–590 (IHFY…LDLI).

This sequence belongs to the glycosyltransferase 2 family. Plant cellulose synthase-like C subfamily.

It localises to the golgi apparatus membrane. Probable beta-1,4-glucan synthase rather involved in the synthesis of the xyloglucan backbone than cellulose. Seems to work simultaneously with xyloglucan 6-xylosyltransferase. Xyloglucan is a noncellulosic polysaccharides of plant cell wall and consists of a glucan backbone substituted by xylose, galactose and fucose. The polypeptide is Probable xyloglucan glycosyltransferase 9 (CSLC9) (Oryza sativa subsp. japonica (Rice)).